Reading from the N-terminus, the 432-residue chain is MLDKIEVPIEAIAAREILDSRGRPTIEAEVLLESGALGLAQVPSGASTGSFEAHELRDDDPQRYGGKGVLKAVRNVHEKIVPVLEGMNAFDQASIDLAMIDRDGTANKRELGANAILAVSLATAKAAAADLGLPLYRYLGGPMANVLPVPMMNVINGGSHADNNVDFQEFMIFPIGADSFKEGLRWGAEVFAALGKALHERKLLTGVGDEGGYAPNLASNQEALDILIESIERAGYKPGSQVALAMDVAASEFYRDGQYIYDGSAHSPAEMVDFLASLVERYPIISIEDGLHEEDWDNWKLLTDKLGARIQLVGDDLMVTNPIRLQKAIDLGIANSILIKLNQIGSLTETLQTIALATRHGYRSVISHRSGETEDTTIADLAVATNAGQIKTGSLSRSERVAKYNRLLRIEEELGDRAVYAPKVGLGPKFLA.

A (2R)-2-phosphoglycerate-binding site is contributed by Gln-168. Glu-210 acts as the Proton donor in catalysis. The Mg(2+) site is built by Asp-247, Glu-288, and Asp-315. (2R)-2-phosphoglycerate-binding residues include Lys-340, Arg-369, Ser-370, and Lys-391. The Proton acceptor role is filled by Lys-340.

It belongs to the enolase family. It depends on Mg(2+) as a cofactor.

It is found in the cytoplasm. Its subcellular location is the secreted. The protein localises to the cell surface. It carries out the reaction (2R)-2-phosphoglycerate = phosphoenolpyruvate + H2O. The protein operates within carbohydrate degradation; glycolysis; pyruvate from D-glyceraldehyde 3-phosphate: step 4/5. In terms of biological role, catalyzes the reversible conversion of 2-phosphoglycerate (2-PG) into phosphoenolpyruvate (PEP). It is essential for the degradation of carbohydrates via glycolysis. The chain is Enolase from Microcystis aeruginosa (strain NIES-843 / IAM M-2473).